Here is a 168-residue protein sequence, read N- to C-terminus: MIFIDNRQNKFDVTEELTKKLEEVISFVLKEEKVKEDCEVSLVFVDNEEIRGINNETRGIDKTTDVLSFPMIDYPEDKVYKDVYLEHEFDKCYFDGDELILGDIVLSLERTKEQSIEFNHSFEREACYLVTHSVLHLLGYDHMEEEEKARMRGREEELLGKLNITRES.

Zn(2+) is bound by residues histidine 132, histidine 136, and histidine 142.

Belongs to the endoribonuclease YbeY family. Requires Zn(2+) as cofactor.

It is found in the cytoplasm. In terms of biological role, single strand-specific metallo-endoribonuclease involved in late-stage 70S ribosome quality control and in maturation of the 3' terminus of the 16S rRNA. The sequence is that of Endoribonuclease YbeY from Clostridium perfringens (strain SM101 / Type A).